We begin with the raw amino-acid sequence, 466 residues long: Putative multidrug resistance protein MdtD (466 aa).

14 helical membrane-spanning segments follow: residues 11-31 (LWIVAFGFFMQTLDTTIVNTA), 48-68 (SVIVSYVLTVAVMLPASGWLA), 71-91 (IGVKNIFFAAILLFTLGSLLC), 105-125 (VIQGIGGAMMVPVGRLTVMKI), 137-157 (FVTLPGQIGPLMGPALGGFLV), 164-184 (WIFLINLPVGIIGALATWFLM), 194-214 (FDISGFLWLAVGMATLTLALD), 218-238 (SLGIPPIAIFALITVGLIALL), 262-282 (FSIGLTGGLLARIGSGMLPFM), 286-306 (FLQLGMGFSPFHAGLMMVPMV), 328-347 (VLIVSTLLLALVTALFALVA), 351-370 (WIWMIPIVLFFLGMVNAIRF), 403-423 (LGVSIAGILLGMFSQPHMAAG), and 429-449 (MVFIYTYLSMIVIIALPALIF).

It belongs to the major facilitator superfamily. TCR/Tet family.

The protein resides in the cell inner membrane. This is Putative multidrug resistance protein MdtD from Pectobacterium carotovorum subsp. carotovorum (strain PC1).